A 317-amino-acid chain; its full sequence is uncharacterized protein (317 aa).

This is an uncharacterized protein from Schizosaccharomyces pombe (strain 972 / ATCC 24843) (Fission yeast).